The chain runs to 122 residues: Large ribosomal subunit protein uL18 (122 aa).

Residues 1 to 22 show a composition bias toward basic residues; it reads MDKNKKLQSKRLRRRRHVRNKL. Residues 1 to 25 form a disordered region; sequence MDKNKKLQSKRLRRRRHVRNKLRGS.

This sequence belongs to the universal ribosomal protein uL18 family. Part of the 50S ribosomal subunit; part of the 5S rRNA/L5/L18/L25 subcomplex. Contacts the 5S and 23S rRNAs.

In terms of biological role, this is one of the proteins that bind and probably mediate the attachment of the 5S RNA into the large ribosomal subunit, where it forms part of the central protuberance. This is Large ribosomal subunit protein uL18 from Rhodopirellula baltica (strain DSM 10527 / NCIMB 13988 / SH1).